We begin with the raw amino-acid sequence, 368 residues long: (Iso)eugenol O-methyltransferase (368 aa).

A propeptide spanning residues 1–2 (MG) is cleaved from the precursor. Residues Ser-187, 211-212 (GG), Asp-234, 254-255 (DM), and Lys-268 contribute to the S-adenosyl-L-methionine site. The active-site Proton acceptor is His-272.

Belongs to the class I-like SAM-binding methyltransferase superfamily. Cation-independent O-methyltransferase family. COMT subfamily. Homodimer. In terms of tissue distribution, expressed in petals, style and stamens, but not in stigma, sepals, leaves or stem tissues.

The catalysed reaction is (E)-isoeugenol + S-adenosyl-L-methionine = (E)-isomethyleugenol + S-adenosyl-L-homocysteine + H(+). Its function is as follows. Catalyzes the methylation of the para-4-hydroxyl of both eugenol and (iso)eugenol to methyleugenol and isomethyleugenol, respectively. The resulting products are part of a complex mixture of low-molecular-weight volatile compounds emitted by the flowers to attract pollinators. In Clarkia breweri (Fairy fans), this protein is (Iso)eugenol O-methyltransferase (IEMT1).